A 318-amino-acid polypeptide reads, in one-letter code: Taste receptor type 2 member 14 (318 aa).

At 1-7 (MGGVIKN) the chain is on the extracellular side. Residues 8-28 (ISTFVLIVEFIIGNLGNSFIA) form a helical membrane-spanning segment. At 29–55 (LVNCIDWVKRRKISLVDQLLTALAISR) the chain is on the cytoplasmic side. A helical membrane pass occupies residues 56–76 (ISLVWLIFGSWCVSAFFPALF). The Extracellular portion of the chain corresponds to 77-87 (ATEKMFRMLTN). Positions 86 and 89 each coordinate cholesterol. The chain crosses the membrane as a helical span at residues 88 to 108 (IWAVTNHFSVWLATGLGTFYF). The Cytoplasmic segment spans residues 109–129 (LKIANFSNSIFIYLKWRVKKV). Residues 130-150 (VLVLLLVTSVFLFLNIALINI) traverse the membrane as a helical segment. Residues 151–184 (HINASINGYGGNKTCSSDSNDFTRFSSLIALTSS) are Extracellular-facing. N-linked (GlcNAc...) asparagine glycans are attached at residues N153 and N162. Position 180 (A180) interacts with cholesterol. The chain crosses the membrane as a helical span at residues 185–205 (VFIFIPFILSLAIFLLLTFSL). Over 206 to 232 (WKHCKKMQHTVKASGDASTKAHRGVMQ) the chain is Cytoplasmic. Residues 233 to 253 (TVIAFLLLYPIFSLSFFIAVW) traverse the membrane as a helical segment. Over 254-261 (TSGWLEEN) the chain is Extracellular. Residues 262–282 (LIILSQVMGMAYPSCHSCILI) traverse the membrane as a helical segment. Positions 265 and 268 each coordinate cholesterol. Residues 283-317 (LGNKKLRQASLSVLWWLKYRFKDGEPSGHKGFRES) lie on the Cytoplasmic side of the membrane.

It belongs to the G-protein coupled receptor T2R family. Core component of the TAS2R14-GNAI1 complex, consisting of TAS2R14, GNAI1, GNB1 and GNG2; within the complex interacts with GNAI1. Core component of the TAS2R14-GNAT3 complex, consisting of TAS2R14, GNAT3, GNB1 and GNG2; within the complex interacts with GNAT3. Core component of the TAS2R14-GNAS2 complex, consisting of TAS2R14, GNAS2, GNB1 and GNG2; within the complex interacts with GNAS2.

It localises to the membrane. It carries out the reaction Ca(2+)(in) = Ca(2+)(out). The catalysed reaction is 3',5'-cyclic AMP(in) = 3',5'-cyclic AMP(out). Its activity is regulated as follows. Basal activity is enhanced by binding to bitter tastants, such as flufenamic acid and aristolochic acid. Regulated by cholesterol in a concentration-dependent manner. Its function is as follows. Gustducin-linked G-protein coupled receptor that plays a role in the perception of bitterness. The activity of this receptor stimulates GNAT3, activating the gustducin G-protein pathway. Likely plays a role in sensing the chemical composition of the gastrointestinal content and other extra-oral tissues via the inhibitory G-protein pathways. This chain is Taste receptor type 2 member 14 (TAS2R14), found in Pongo pygmaeus (Bornean orangutan).